Consider the following 152-residue polypeptide: Deoxyuridine 5'-triphosphate nucleotidohydrolase (152 aa).

Substrate-binding positions include 71–73 (RSG), N84, 88–90 (LID), and M98.

This sequence belongs to the dUTPase family. Mg(2+) is required as a cofactor.

The enzyme catalyses dUTP + H2O = dUMP + diphosphate + H(+). The protein operates within pyrimidine metabolism; dUMP biosynthesis; dUMP from dCTP (dUTP route): step 2/2. Its function is as follows. This enzyme is involved in nucleotide metabolism: it produces dUMP, the immediate precursor of thymidine nucleotides and it decreases the intracellular concentration of dUTP so that uracil cannot be incorporated into DNA. In Aeromonas hydrophila subsp. hydrophila (strain ATCC 7966 / DSM 30187 / BCRC 13018 / CCUG 14551 / JCM 1027 / KCTC 2358 / NCIMB 9240 / NCTC 8049), this protein is Deoxyuridine 5'-triphosphate nucleotidohydrolase.